Here is a 454-residue protein sequence, read N- to C-terminus: UDP-N-acetylmuramoylalanine--D-glutamate ligase (454 aa).

115 to 121 (GTNGKTT) provides a ligand contact to ATP.

Belongs to the MurCDEF family.

The protein resides in the cytoplasm. It catalyses the reaction UDP-N-acetyl-alpha-D-muramoyl-L-alanine + D-glutamate + ATP = UDP-N-acetyl-alpha-D-muramoyl-L-alanyl-D-glutamate + ADP + phosphate + H(+). It participates in cell wall biogenesis; peptidoglycan biosynthesis. Its function is as follows. Cell wall formation. Catalyzes the addition of glutamate to the nucleotide precursor UDP-N-acetylmuramoyl-L-alanine (UMA). The polypeptide is UDP-N-acetylmuramoylalanine--D-glutamate ligase (Thermoanaerobacter pseudethanolicus (strain ATCC 33223 / 39E) (Clostridium thermohydrosulfuricum)).